Reading from the N-terminus, the 127-residue chain is Two-component response regulator ORR41 (127 aa).

Residues 7 to 125 (RVLLVEDEEI…KLGVILAKFR (119 aa)) form the Response regulatory domain. Residue Asp-60 is modified to 4-aspartylphosphate.

This sequence belongs to the ARR family. Type-C subfamily. Post-translationally, two-component system major event consists of a His-to-Asp phosphorelay between a sensor histidine kinase (HK) and a response regulator (RR). In plants, the His-to-Asp phosphorelay involves an additional intermediate named Histidine-containing phosphotransfer protein (HPt). This multistep phosphorelay consists of a His-Asp-His-Asp sequential transfer of a phosphate group between first a His and an Asp of the HK protein, followed by the transfer to a conserved His of the HPt protein and finally the transfer to an Asp in the receiver domain of the RR protein.

Functionally, functions as a response regulator involved in His-to-Asp phosphorelay signal transduction system. Phosphorylation of the Asp residue in the receiver domain activates the ability of the protein to promote the transcription of target genes. May directly activate some type-A response regulators in response to cytokinins. This is Two-component response regulator ORR41 from Oryza sativa subsp. japonica (Rice).